Reading from the N-terminus, the 77-residue chain is NAD(P)H-quinone oxidoreductase subunit L (77 aa).

A run of 2 helical transmembrane segments spans residues 12 to 32 (LVAY…ILFY) and 47 to 67 (LIVY…SPFL).

This sequence belongs to the complex I NdhL subunit family. As to quaternary structure, NDH-1 can be composed of about 15 different subunits; different subcomplexes with different compositions have been identified which probably have different functions.

The protein localises to the cellular thylakoid membrane. It catalyses the reaction a plastoquinone + NADH + (n+1) H(+)(in) = a plastoquinol + NAD(+) + n H(+)(out). The catalysed reaction is a plastoquinone + NADPH + (n+1) H(+)(in) = a plastoquinol + NADP(+) + n H(+)(out). Its function is as follows. NDH-1 shuttles electrons from an unknown electron donor, via FMN and iron-sulfur (Fe-S) centers, to quinones in the respiratory and/or the photosynthetic chain. The immediate electron acceptor for the enzyme in this species is believed to be plastoquinone. Couples the redox reaction to proton translocation, and thus conserves the redox energy in a proton gradient. Cyanobacterial NDH-1 also plays a role in inorganic carbon-concentration. This is NAD(P)H-quinone oxidoreductase subunit L from Prochlorococcus marinus subsp. pastoris (strain CCMP1986 / NIES-2087 / MED4).